A 496-amino-acid polypeptide reads, in one-letter code: MDFSPPHGLRGGRSPSLQDTTISSSHTQKNGGDSTPLPPINERLAFLRPSRELLEYYRKKIAEFDEEHEDLVKRLEQYKATYEEQHKLQWEMRQREEEIAELQKALSDMQVYLFQEREHVLRLYSENDRLKIRELEDRKKIQKLLALVGTSEGDITYFHKEPPSKVTIPQRTVQSGDPFDRKVQRSGRAGVKQVPLKAPGKQDRTKAAEKEDPQILLLQVEALQAQLEEQTRLSKEQIETLLEDRKVRMEEAQVQHQRDQDKMKAMTDKLNKTQKLLYESTRDFLQLKFECRANEKSWMAEKDRLLRELDRCREQLAFSIDPEQEREHEREHEREILRLSLAEKATRSSHSEEVKSLTEQLAQAHRLSEMYREQCVTLEDELGRIREEGDVGREIFKERSDKVAKRLQLMTQRYEALEKRRNMEVEGYKTDIKLLRQRLKDVEKQLFKVTLNIGPDQDLAILDAVRQGNKKTQKIQGELRNLKAKIYGLENELRIG.

The interval 1-42 (MDFSPPHGLRGGRSPSLQDTTISSSHTQKNGGDSTPLPPINE) is disordered. Positions 15–33 (PSLQDTTISSSHTQKNGGD) are enriched in polar residues. Positions 51-113 (RELLEYYRKK…KALSDMQVYL (63 aa)) form a coiled coil. The tract at residues 170–208 (QRTVQSGDPFDRKVQRSGRAGVKQVPLKAPGKQDRTKAA) is disordered. A coiled-coil region spans residues 214–495 (QILLLQVEAL…IYGLENELRI (282 aa)).

In Xenopus laevis (African clawed frog), this protein is Coiled-coil domain-containing protein 77 (ccdc77).